The sequence spans 660 residues: Genome-linked protein precursor (660 aa).

A signal peptide spans 1–25 (MALLGIKLMTLVFAAWLSCCHSSSA). 2 helical membrane-spanning segments follow: residues 131–151 (AVGMLLMIIIWIWSSIFLVVY) and 165–185 (AVCVGFLIFCTICAFRLISWI). In terms of domain architecture, Peptidase S39 spans 224–416 (VEGYKPFIIP…GLTSPDFKFE (193 aa)). Residues His-272, Asp-304, and Ser-373 each act as for protease activity in the active site. Disordered regions lie at residues 463–490 (EEESESDDERGKVVPPAKPSNYGEGCPP) and 595–660 (TKAP…AWVR).

The protein belongs to the peptidase S39B family.

The protein localises to the host membrane. Precursor from which the VPg molecule is probably released at the onset of the RNA synthesis. Essential for virus replication. The chain is Genome-linked protein precursor from Euphorbia pulcherrima (Poinsettia).